The sequence spans 464 residues: GDNF family receptor alpha-2 (464 aa).

Residues M1–A21 form the signal peptide. Cystine bridges form between C40–C93, C47–C53, C63–C78, C95–C105, C161–C222, C168–C174, C185–C200, C195–C241, C224–C229, C251–C323, C258–C264, C275–C293, C285–C347, and C325–C335. A glycan (N-linked (GlcNAc...) asparagine) is linked at N52. N357 carries N-linked (GlcNAc...) asparagine glycosylation. Positions M363 to T392 are disordered. A compositionally biased stretch (low complexity) spans T381–T392. N413 carries an N-linked (GlcNAc...) asparagine glycan. A lipid anchor (GPI-anchor amidated serine) is attached at S443. The propeptide at C444–Q464 is removed in mature form.

Belongs to the GDNFR family. Interacts with NRTN ligand and RET: forms a 2:2:2 ternary complex composed of NRTN ligand, GFRA2 and RET receptor. Also forms a 4:4:4 tetrameric complex composed of 4 copies of NRTN ligand, GFRA2 and RET receptor, which prevents endocytosis of RET. Interacts with SORL1. In terms of tissue distribution, neurons of the superior cervical and dorsal root ganglia, and adult brain and testis. Low level in the substantia nigra, spleen and adrenal gland. Isoform 1, isoform 2 and isoform 3 are all expressed in brain, liver, ileum, spleen, heart and kidney. In brain, isoform 1 is most abundant, isoform 2 slightly less and isoform 3 is lowest. No significant levels of isoform 1, isoform 2 or isoform 3 expression in testis.

It is found in the cell membrane. In terms of biological role, receptor for neurturin (NRTN), a growth factor that supports the survival of sympathetic neurons. NRTN-binding leads to autophosphorylation and activation of the RET receptor. Also able to mediate GDNF signaling through the RET tyrosine kinase receptor. Functionally, participates in NRTN-induced 'Ser-727' phosphorylation of STAT3. The polypeptide is GDNF family receptor alpha-2 (Mus musculus (Mouse)).